Consider the following 243-residue polypeptide: Probable transcriptional regulatory protein BAPKO_0024/BafPKo_0025 (243 aa).

It belongs to the TACO1 family.

The protein localises to the cytoplasm. The protein is Probable transcriptional regulatory protein BAPKO_0024/BafPKo_0025 of Borreliella afzelii (strain PKo) (Borrelia afzelii).